We begin with the raw amino-acid sequence, 523 residues long: NADH-ubiquinone oxidoreductase chain 4 (523 aa).

14 consecutive transmembrane segments (helical) span residues 22 to 42 (FFIM…AIAL), 62 to 82 (LLTF…SALF), 120 to 140 (ISLF…LVSW), 149 to 169 (EYCI…SVLD), 170 to 190 (LLLF…IIGV), 204 to 224 (FFLY…LIYF), 246 to 266 (ILWL…PVHI), 276 to 296 (PTAG…YGFL), 303 to 323 (FPYA…IAIV), 338 to 358 (IIAY…FSQN), 366 to 386 (ILLM…VGVL), 404 to 424 (TMPI…SLPG), 444 to 464 (FVAF…LWLC), and 488 to 508 (FFMF…PEPF).

It belongs to the complex I subunit 4 family.

Its subcellular location is the mitochondrion membrane. The enzyme catalyses a ubiquinone + NADH + 5 H(+)(in) = a ubiquinol + NAD(+) + 4 H(+)(out). Core subunit of the mitochondrial membrane respiratory chain NADH dehydrogenase (Complex I) that is believed to belong to the minimal assembly required for catalysis. Complex I functions in the transfer of electrons from NADH to the respiratory chain. The immediate electron acceptor for the enzyme is believed to be ubiquinone. The protein is NADH-ubiquinone oxidoreductase chain 4 (ND4) of Prototheca wickerhamii.